A 461-amino-acid chain; its full sequence is Protein IQ-DOMAIN 2 (461 aa).

A disordered region spans residues 1-55 (MGKKAKWFSSVKKAFSPDSKKSKQKLAEGQNGVISNPPVVDNVRQSSSSPPPALA). Residues 114–142 (EEAAAILIQTIFRGYLARRALRAMRGLVR) enclose the IQ domain. The tract at residues 141–158 (VRLKLLMEGSVVKRQAAN) is calmodulin-binding. Residues 278 to 461 (PLESSEKEQS…GVTVTNGAGS (184 aa)) are disordered. The span at 310–345 (LTRNGSTQPNTPSSARGTPRNKNSFFSPPTPSRLNQ) shows a compositional bias: polar residues. Positions 425 to 432 (KKRLSYPT) match the Nuclear localization signal motif.

The protein belongs to the IQD family. In terms of assembly, binds to multiple calmodulin (CaM) in the presence of Ca(2+) and CaM-like proteins.

It localises to the nucleus. The protein localises to the cytoplasm. It is found in the cytoskeleton. Functionally, may be involved in cooperative interactions with calmodulins or calmodulin-like proteins. Recruits calmodulin proteins to microtubules, thus being a potential scaffold in cellular signaling and trafficking. May associate with nucleic acids and regulate gene expression at the transcriptional or post-transcriptional level. The sequence is that of Protein IQ-DOMAIN 2 from Arabidopsis thaliana (Mouse-ear cress).